Consider the following 1670-residue polypeptide: Hemolymph clottable protein (1670 aa).

Positions 1 to 14 (MKALILLLLGACQA) are cleaved as a signal peptide. Residues 15 to 674 (LQPGLEYQYR…FANFVTTTIY (660 aa)) form a vittelogenin region. Positions 15-764 (LQPGLEYQYR…LKIDGQQRGL (750 aa)) constitute a Vitellogenin domain. Asn106 is a glycosylation site (N-linked (GlcNAc...) asparagine). Residues 198 to 231 (SSYTTKTKSKTSSKTSSKTSSKTSSKTSKTGKTS) are compositionally biased toward low complexity. A disordered region spans residues 198-236 (SSYTTKTKSKTSSKTSSKTSSKTSSKTSKTGKTSPGQLA). N-linked (GlcNAc...) asparagine glycans are attached at residues Asn319, Asn459, and Asn1301. One can recognise a VWFD domain in the interval 1390–1550 (VSCTIDETKV…SWASPGEGCA (161 aa)). 2 disulfides stabilise this stretch: Cys1392–Cys1513 and Cys1414–Cys1549.

As to quaternary structure, homodimer; disulfide-linked. Also exists as oligomers. Post-translationally, glycosylated. Contains mannose and N-acetylglucosamine. Substrate of transglutaminase. Widely expressed with highest levels in gill and heart. Not expressed in hemocytes.

The protein resides in the secreted. In terms of biological role, forms stable clots in the presence of calcium. This is Hemolymph clottable protein from Penaeus monodon (Giant tiger prawn).